The sequence spans 539 residues: GMP synthase [glutamine-hydrolyzing] (539 aa).

The region spanning 4 to 203 is the Glutamine amidotransferase type-1 domain; that stretch reads KILILDFGSQ…VHDICGCKSD (200 aa). Cys-82 (nucleophile) is an active-site residue. Active-site residues include His-177 and Glu-179. The GMPS ATP-PPase domain occupies 204–395; sequence WNMPDYIAEA…LGLPHDMVYR (192 aa). 231 to 237 lines the ATP pocket; that stretch reads SGGVDSS.

As to quaternary structure, homodimer.

The enzyme catalyses XMP + L-glutamine + ATP + H2O = GMP + L-glutamate + AMP + diphosphate + 2 H(+). The protein operates within purine metabolism; GMP biosynthesis; GMP from XMP (L-Gln route): step 1/1. Its function is as follows. Catalyzes the synthesis of GMP from XMP. This is GMP synthase [glutamine-hydrolyzing] from Janthinobacterium sp. (strain Marseille) (Minibacterium massiliensis).